Consider the following 546-residue polypeptide: Chaperonin GroEL (546 aa).

ATP-binding positions include 30-33, Lys-51, 87-91, Gly-415, and Asp-497; these read TLGP and DGTTT. The segment at 527-546 is disordered; that stretch reads PKKDSPAPAMPGGGMGGMDF. Gly residues predominate over residues 537-546; that stretch reads PGGGMGGMDF.

The protein belongs to the chaperonin (HSP60) family. In terms of assembly, forms a cylinder of 14 subunits composed of two heptameric rings stacked back-to-back. Interacts with the co-chaperonin GroES.

Its subcellular location is the cytoplasm. The enzyme catalyses ATP + H2O + a folded polypeptide = ADP + phosphate + an unfolded polypeptide.. Functionally, together with its co-chaperonin GroES, plays an essential role in assisting protein folding. The GroEL-GroES system forms a nano-cage that allows encapsulation of the non-native substrate proteins and provides a physical environment optimized to promote and accelerate protein folding. This is Chaperonin GroEL from Methylobacterium radiotolerans (strain ATCC 27329 / DSM 1819 / JCM 2831 / NBRC 15690 / NCIMB 10815 / 0-1).